The primary structure comprises 219 residues: Thymidylate kinase (219 aa).

7–14 (GIDGAGKS) is an ATP binding site.

Belongs to the thymidylate kinase family.

The enzyme catalyses dTMP + ATP = dTDP + ADP. Its function is as follows. Phosphorylation of dTMP to form dTDP in both de novo and salvage pathways of dTTP synthesis. The chain is Thymidylate kinase from Chlorobium limicola (strain DSM 245 / NBRC 103803 / 6330).